Here is a 117-residue protein sequence, read N- to C-terminus: Large ribosomal subunit protein bL20c (117 aa).

The protein belongs to the bacterial ribosomal protein bL20 family.

Its subcellular location is the plastid. The protein resides in the chloroplast. Binds directly to 23S ribosomal RNA and is necessary for the in vitro assembly process of the 50S ribosomal subunit. It is not involved in the protein synthesizing functions of that subunit. The chain is Large ribosomal subunit protein bL20c from Gossypium hirsutum (Upland cotton).